The sequence spans 408 residues: Na(+)/H(+) antiporter NhaA (408 aa).

12 consecutive transmembrane segments (helical) span residues 42-62 (LMFV…PVYF), 69-89 (VLGL…FFLL), 110-130 (ALPG…FIAV), 140-160 (GWAI…SLLG), 169-189 (IFLT…IALF), 192-212 (AELT…LAAL), 215-235 (FGVK…FFVL), 238-258 (GIHA…QAST), 277-297 (VAFL…FAGL), 312-332 (LGLF…AIWL), 346-366 (LYGV…IGLL), and 380-400 (IGVL…LRVT).

The protein belongs to the NhaA Na(+)/H(+) (TC 2.A.33) antiporter family.

It is found in the cell inner membrane. The catalysed reaction is Na(+)(in) + 2 H(+)(out) = Na(+)(out) + 2 H(+)(in). In terms of biological role, na(+)/H(+) antiporter that extrudes sodium in exchange for external protons. The chain is Na(+)/H(+) antiporter NhaA from Nitrobacter hamburgensis (strain DSM 10229 / NCIMB 13809 / X14).